Reading from the N-terminus, the 394-residue chain is 4-hydroxyphenylpyruvate dioxygenase (394 aa).

VOC domains lie at serine 18–tyrosine 149 and phenylalanine 181–lysine 339. The Fe cation site is built by histidine 184, histidine 267, and glutamate 350.

The protein belongs to the 4HPPD family. Homodimer. The cofactor is Fe cation.

It localises to the cytoplasm. It is found in the endoplasmic reticulum membrane. The protein localises to the golgi apparatus membrane. It carries out the reaction 3-(4-hydroxyphenyl)pyruvate + O2 = homogentisate + CO2. Its pathway is amino-acid degradation; L-phenylalanine degradation; acetoacetate and fumarate from L-phenylalanine: step 3/6. Functionally, catalyzes the conversion of 4-hydroxyphenylpyruvic acid to homogentisic acid, one of the steps in tyrosine catabolism. The polypeptide is 4-hydroxyphenylpyruvate dioxygenase (hpd) (Xenopus tropicalis (Western clawed frog)).